Reading from the N-terminus, the 416-residue chain is Formyl-CoA:oxalate CoA-transferase (416 aa).

CoA is bound by residues 17–18, arginine 38, 72–75, 96–98, histidine 104, and 137–140; these read QS, LNTK, NFH, and KAYE. Residue aspartate 169 is the Nucleophile of the active site. Residue 248–250 participates in substrate binding; that stretch reads GGQ. 273–275 contributes to the CoA binding site; that stretch reads QEQ.

Belongs to the CoA-transferase III family. Frc subfamily. Homodimer.

The catalysed reaction is formyl-CoA + oxalate = oxalyl-CoA + formate. Its pathway is metabolic intermediate degradation; oxalate degradation; CO(2) and formate from oxalate: step 1/2. Its function is as follows. Involved in the catabolism of oxalate and in the adapatation to low pH via the induction of the oxalate-dependent acid tolerance response (ATR). Catalyzes the transfer of the CoA moiety from formyl-CoA to oxalate. This is Formyl-CoA:oxalate CoA-transferase from Escherichia coli (strain ATCC 8739 / DSM 1576 / NBRC 3972 / NCIMB 8545 / WDCM 00012 / Crooks).